The primary structure comprises 398 residues: Succinate--CoA ligase [ADP-forming] subunit beta (398 aa).

One can recognise an ATP-grasp domain in the interval 9–254; that stretch reads KRLLHEYGAP…TSEEDPKEIE (246 aa). ATP is bound by residues lysine 46, 53–55, glutamate 109, alanine 112, and glutamate 117; that span reads GRG. Mg(2+) contacts are provided by asparagine 209 and aspartate 223. Substrate-binding positions include asparagine 274 and 331–333; that span reads GIM.

This sequence belongs to the succinate/malate CoA ligase beta subunit family. In terms of assembly, heterotetramer of two alpha and two beta subunits. The cofactor is Mg(2+).

It carries out the reaction succinate + ATP + CoA = succinyl-CoA + ADP + phosphate. The catalysed reaction is GTP + succinate + CoA = succinyl-CoA + GDP + phosphate. Its pathway is carbohydrate metabolism; tricarboxylic acid cycle; succinate from succinyl-CoA (ligase route): step 1/1. Functionally, succinyl-CoA synthetase functions in the citric acid cycle (TCA), coupling the hydrolysis of succinyl-CoA to the synthesis of either ATP or GTP and thus represents the only step of substrate-level phosphorylation in the TCA. The beta subunit provides nucleotide specificity of the enzyme and binds the substrate succinate, while the binding sites for coenzyme A and phosphate are found in the alpha subunit. The chain is Succinate--CoA ligase [ADP-forming] subunit beta from Bartonella henselae (strain ATCC 49882 / DSM 28221 / CCUG 30454 / Houston 1) (Rochalimaea henselae).